The following is a 552-amino-acid chain: MRIATSTLLVGAASAAFAPQDGTQRVLNGFDSIKSAAHSIQKPLQTFEEAMASMTSEAKANWDHLKLLVPDAEEQAKTFFPKKPKPASRKPDSAWDHIVKGADIQAMWVEGATPEETHRKIDGKLDNYNLRARSVDPSKLGVDTVKQYSGYLDDEANDKHLFYWFFESRNDPKNDPVVLWLNGGPGCSSLTGLLFELGPGAINAKIEIVHNPYAWNNNASVIFLDQPVNVGYSYSGGSVSNTVAAGKDIYALLTLFFHQFPEYAKQDFHIAGESYAGHYIPVFASEILSHKKRNINLKSVLIGNGLTDGLTQYEYYRPMACGEGGWKAVLSESECQAMDNALPRCQSMIQNCYDSGSVWSCVPASIYCNNAMIGPYQRTGRNVYDIRGPCKDSGNLCYPELGYISEYLNRREVMEALGAEVSSYDSCNFDINRNFLFQGDWMQPYHRLVPELLNQIPVLIYAGDADFICNWLGNQGWTEALEWKGKKDYNRADYSPLTLASAHDVKPYGKVKSSGNFTFMKIFEAGHMVPYDQAEPSVDFVNRWLAGEWFAA.

Positions 1-18 (MRIATSTLLVGAASAAFA) are cleaved as a signal peptide. Positions 19 to 133 (PQDGTQRVLN…KLDNYNLRAR (115 aa)) are excised as a propeptide. 5 cysteine pairs are disulfide-bonded: cysteine 187-cysteine 427, cysteine 321-cysteine 335, cysteine 345-cysteine 368, cysteine 352-cysteine 361, and cysteine 390-cysteine 397. An N-linked (GlcNAc...) asparagine glycan is attached at asparagine 218. Serine 274 is an active-site residue. Aspartate 466 is an active-site residue. Asparagine 516 is a glycosylation site (N-linked (GlcNAc...) asparagine). Residue histidine 527 is part of the active site.

This sequence belongs to the peptidase S10 family.

It is found in the vacuole. It catalyses the reaction Release of a C-terminal amino acid with broad specificity.. Vacuolar carboxypeptidase involved in degradation of small peptides. Digests preferentially peptides containing an aliphatic or hydrophobic residue in P1' position, as well as methionine, leucine or phenylalanine in P1 position of ester substrate. The sequence is that of Carboxypeptidase Y homolog A (CPYA) from Pyricularia oryzae (strain 70-15 / ATCC MYA-4617 / FGSC 8958) (Rice blast fungus).